The primary structure comprises 521 residues: MAAGSGVVPPPLGAGLCTVKVEEDSPGNQESSGSGDWQNPETSRKQFRQLRYQEVAGPEEALSRLWELCRRWLRPELLSKEQIMELLVLEQFLTILPQELQAYVRDHSPESGEEAAALARTLQRALDRASPQGFMTFKDVAESLTWEEWEQLAAARKGFCEESTKDAGSTVVPGLETRTVNTDVILKQEILKEAEPQAWLQEVSQGMVPALTKCGDPSEDWEEKLPKAAVLLQLQGSEEQGRTAIPLLIGVSREERDSKNNESENSGSSVLGQHIQTAEGLGTNSQCGDDHKQGFHVKCHSVKPHSSVDSAVGLLETQRQFQEDKPYKCDSCEKGFRQRSDLFKHQRIHTGEKPYQCQECGKRFSQSAALVKHQRTHTGEKPYACPECGECFRQSSHLSRHQRTHASEKYYKCEECGEIVHVSSLFRHQRLHRGERPYKCGDCEKSFRQRSDLFKHQRTHTGEKPYACVVCGRRFSQSATLIKHQRTHTGEKPYKCFQCGERFRQSTHLVRHQRIHQNSVS.

Residues 1–45 (MAAGSGVVPPPLGAGLCTVKVEEDSPGNQESSGSGDWQNPETSRK) form a disordered region. Lys-20 participates in a covalent cross-link: Glycyl lysine isopeptide (Lys-Gly) (interchain with G-Cter in SUMO2). The span at 26 to 41 (PGNQESSGSGDWQNPE) shows a compositional bias: polar residues. The SCAN box domain maps to 38–133 (QNPETSRKQF…RALDRASPQG (96 aa)). The 62-residue stretch at 135 to 196 (MTFKDVAESL…KQEILKEAEP (62 aa)) folds into the KRAB domain. Lys-259 is covalently cross-linked (Glycyl lysine isopeptide (Lys-Gly) (interchain with G-Cter in SUMO2)). C2H2-type zinc fingers lie at residues 327 to 349 (YKCDSCEKGFRQRSDLFKHQRIH), 355 to 377 (YQCQECGKRFSQSAALVKHQRTH), and 383 to 405 (YACPECGECFRQSSHLSRHQRTH). The C2H2-type 4; atypical zinc finger occupies 411-432 (YKCEECGEIVHVSSLFRHQRLH). Lys-412 is covalently cross-linked (Glycyl lysine isopeptide (Lys-Gly) (interchain with G-Cter in SUMO2)). C2H2-type zinc fingers lie at residues 438 to 460 (YKCGDCEKSFRQRSDLFKHQRTH), 466 to 488 (YACVVCGRRFSQSATLIKHQRTH), and 494 to 516 (YKCFQCGERFRQSTHLVRHQRIH).

Belongs to the krueppel C2H2-type zinc-finger protein family. As to expression, expressed at high level in testis.

It is found in the nucleus. In terms of biological role, may be involved in transcriptional regulation. This Mus musculus (Mouse) protein is Zinc finger protein 394 (Znf394).